The primary structure comprises 182 residues: Ribosome maturation factor RimM (182 aa).

A PRC barrel domain is found at 102–182; that stretch reads EEGDYYWKDL…TIEVDWDPGF (81 aa).

It belongs to the RimM family. As to quaternary structure, binds ribosomal protein uS19.

The protein resides in the cytoplasm. Functionally, an accessory protein needed during the final step in the assembly of 30S ribosomal subunit, possibly for assembly of the head region. Essential for efficient processing of 16S rRNA. May be needed both before and after RbfA during the maturation of 16S rRNA. It has affinity for free ribosomal 30S subunits but not for 70S ribosomes. The sequence is that of Ribosome maturation factor RimM from Salmonella enteritidis PT4 (strain P125109).